Reading from the N-terminus, the 541-residue chain is Chaperonin GroEL (541 aa).

ATP is bound by residues 29–32 (TLGP), 86–90 (DGTTT), glycine 413, 476–478 (NAA), and aspartate 492.

It belongs to the chaperonin (HSP60) family. As to quaternary structure, forms a cylinder of 14 subunits composed of two heptameric rings stacked back-to-back. Interacts with the co-chaperonin GroES.

It localises to the cytoplasm. The catalysed reaction is ATP + H2O + a folded polypeptide = ADP + phosphate + an unfolded polypeptide.. Together with its co-chaperonin GroES, plays an essential role in assisting protein folding. The GroEL-GroES system forms a nano-cage that allows encapsulation of the non-native substrate proteins and provides a physical environment optimized to promote and accelerate protein folding. This chain is Chaperonin GroEL, found in Rhodococcus hoagii (Corynebacterium equii).